The chain runs to 150 residues: Ribonuclease pancreatic delta-type (150 aa).

The signal sequence occupies residues M1–G25. R35 provides a ligand contact to substrate. The active-site Proton acceptor is H37. 4 disulfides stabilise this stretch: C51–C110, C65–C121, C83–C136, and C90–C98. Substrate contacts are provided by residues K66–T70, K91, and R111. Residue H145 is the Proton donor of the active site.

It belongs to the pancreatic ribonuclease family. In terms of assembly, monomer.

It is found in the secreted. The enzyme catalyses an [RNA] containing cytidine + H2O = an [RNA]-3'-cytidine-3'-phosphate + a 5'-hydroxy-ribonucleotide-3'-[RNA].. It carries out the reaction an [RNA] containing uridine + H2O = an [RNA]-3'-uridine-3'-phosphate + a 5'-hydroxy-ribonucleotide-3'-[RNA].. In terms of biological role, endonuclease that catalyzes the cleavage of RNA on the 3' side of pyrimidine nucleotides. Acts on single-stranded and double-stranded RNA. This Rattus exulans (Polynesian rat) protein is Ribonuclease pancreatic delta-type.